The primary structure comprises 165 residues: Glutamyl-tRNA(Gln) amidotransferase subunit F, mitochondrial (165 aa).

A compositionally biased stretch (basic and acidic residues) spans V137–T153. Residues V137–E165 are disordered.

It belongs to the GatF family. As to quaternary structure, subunit of the heterotrimeric GatFAB amidotransferase (AdT) complex, composed of A, B and F subunits.

The protein resides in the mitochondrion inner membrane. The catalysed reaction is L-glutamyl-tRNA(Gln) + L-glutamine + ATP + H2O = L-glutaminyl-tRNA(Gln) + L-glutamate + ADP + phosphate + H(+). Functionally, allows the formation of correctly charged Gln-tRNA(Gln) through the transamidation of misacylated Glu-tRNA(Gln) in the mitochondria. The reaction takes place in the presence of glutamine and ATP through an activated gamma-phospho-Glu-tRNA(Gln). Required for proper protein synthesis within the mitochondrion. This Clavispora lusitaniae (strain ATCC 42720) (Yeast) protein is Glutamyl-tRNA(Gln) amidotransferase subunit F, mitochondrial.